The primary structure comprises 445 residues: Mitochondrial-processing peptidase subunit alpha-2 (445 aa).

The transit peptide at 1 to 13 directs the protein to the mitochondrion; sequence MIGRFIARNYTTS.

It belongs to the peptidase M16 family. Heterodimer of alpha and beta subunits, forming the mitochondrial processing protease (MPP) in which subunit alpha is involved in substrate recognition and binding and subunit beta is the catalytic subunit.

It localises to the mitochondrion matrix. Substrate recognition and binding subunit of the essential mitochondrial processing protease (MPP), which cleaves the mitochondrial sequence off newly imported precursors proteins. The chain is Mitochondrial-processing peptidase subunit alpha-2 (mppA2) from Dictyostelium discoideum (Social amoeba).